We begin with the raw amino-acid sequence, 760 residues long: Probable ATP-dependent RNA helicase DDX27 (760 aa).

Residues 1–50 (MLAELGFIRTIGENDEVPVEPESDSGDEEEEGPIVLGRKQKALQKNRSAD) are disordered. Positions 13–32 (ENDEVPVEPESDSGDEEEEG) are enriched in acidic residues. Ser-23, Ser-25, and Ser-48 each carry phosphoserine. The Required for interaction with the PEBOW complex motif lies at 55–57 (FVF). The tract at residues 80–149 (KRAATTLDEK…TDYSSEDEEI (70 aa)) is disordered. The segment covering 98 to 122 (KAEDKEAKSGKVEEKEGQADSDLKG) has biased composition (basic and acidic residues). Residues 126 to 148 (PGEDEAGSKDEDSETDYSSEDEE) show a composition bias toward acidic residues. 2 positions are modified to phosphoserine: Ser-133 and Ser-144. The short motif at 157 to 166 (KVKEKKKKKK) is the Nuclear localization signal element. The Q motif motif lies at 184 to 212 (LSFQDMNLSRPLLKAITAMGFKQPTPIQK). The 175-residue stretch at 215-389 (IPVGLLGKDI…SVSLKNPVRI (175 aa)) folds into the Helicase ATP-binding domain. An ATP-binding site is contributed by 228-235 (AATGTGKT). Positions 337 to 340 (DEAD) match the DEAD box motif. Residues 419–569 (IVAALLMRTF…DVILKFRDKI (151 aa)) form the Helicase C-terminal domain. 2 disordered regions span residues 605–624 (KGKE…TKEE) and 679–760 (RLAK…KRKK). Basic residues-rich tracts occupy residues 682–691 (KRNRRTKRAR) and 744–760 (RQRR…KRKK).

The protein belongs to the DEAD box helicase family. DDX27/DRS1 subfamily. In terms of assembly, associates with PeBoW complex, composed of BOP1, PES1 and WDR12. Interacts directly with BOP1 and PES1.

The protein localises to the nucleus. It localises to the nucleolus. The protein resides in the chromosome. The enzyme catalyses ATP + H2O = ADP + phosphate + H(+). Its function is as follows. Probable ATP-dependent RNA helicase. Component of the nucleolar ribosomal RNA (rRNA) processing machinery that regulates 3' end formation of ribosomal 47S rRNA. The protein is Probable ATP-dependent RNA helicase DDX27 (Ddx27) of Mus musculus (Mouse).